The sequence spans 227 residues: uncharacterized protein (227 aa).

Residues 52-100 (NKRAKLYRERNKAKLKEKQHKWYHKGGGKEHKKLYDKINLEKSNMRDKN) are a coiled coil.

The protein belongs to the mimivirus L246/L426 family.

This is an uncharacterized protein from Acanthamoeba polyphaga mimivirus (APMV).